Reading from the N-terminus, the 684-residue chain is Threonine--tRNA ligase (684 aa).

In terms of domain architecture, TGS spans 1–64; it reads MTAPNPSSLV…ESDTEVEPVA (64 aa). Residues 261–567 form a catalytic region; that stretch reads DHRKLGVELD…LTEHYAGAFP (307 aa). Zn(2+) contacts are provided by C366, H417, and H544.

Belongs to the class-II aminoacyl-tRNA synthetase family. As to quaternary structure, homodimer. The cofactor is Zn(2+).

The protein localises to the cytoplasm. The catalysed reaction is tRNA(Thr) + L-threonine + ATP = L-threonyl-tRNA(Thr) + AMP + diphosphate + H(+). Functionally, catalyzes the attachment of threonine to tRNA(Thr) in a two-step reaction: L-threonine is first activated by ATP to form Thr-AMP and then transferred to the acceptor end of tRNA(Thr). Also edits incorrectly charged L-seryl-tRNA(Thr). In Mycobacteroides abscessus (strain ATCC 19977 / DSM 44196 / CCUG 20993 / CIP 104536 / JCM 13569 / NCTC 13031 / TMC 1543 / L948) (Mycobacterium abscessus), this protein is Threonine--tRNA ligase.